Consider the following 632-residue polypeptide: Armadillo repeat-containing X-linked protein 2 (632 aa).

Residues 1–6 (MSRVRD) are Mitochondrial intermembrane-facing. Positions 1–6 (MSRVRD) are mitochondrion outer membrane (MOM)-targeting sequence. A helical; Signal-anchor membrane pass occupies residues 7-25 (AGCVAAGIVIGAGAWYCVY). The tract at residues 26–40 (KYTRGRDQTKKRMAK) is mitochondrion outer membrane (MOM)-targeting sequence. The Cytoplasmic portion of the chain corresponds to 26–632 (KYTRGRDQTK…VKVIKLVNKF (607 aa)). 3 disordered regions span residues 68–124 (GFSP…AGVG), 160–304 (APKV…KVEV), and 335–369 (VPDS…RPVA). 2 stretches are compositionally biased toward low complexity: residues 86-120 (EASA…EADG) and 211-241 (VASP…SPGT). Acidic residues predominate over residues 336–356 (PDSEEGESGWTDTESDSDSEP). ARM repeat units follow at residues 376–416 (PYEI…NNAN), 418–457 (SCNQ…NLSE), and 498–537 (ITND…NFAE).

It belongs to the eutherian X-chromosome-specific Armcx family. In terms of tissue distribution, expressed at high levels ovary, heart, testis, prostate, brain, spleen and colon. Expressed at very low levels in liver and thymus. Not expressed in peripheral blood leukocytes. Not expressed in pancreas and ovarian carcinomas.

Its subcellular location is the mitochondrion. It localises to the mitochondrion outer membrane. May regulate the dynamics and distribution of mitochondria in neural cells. This is Armadillo repeat-containing X-linked protein 2 (ARMCX2) from Homo sapiens (Human).